Here is a 185-residue protein sequence, read N- to C-terminus: ATP synthase subunit b 2 (185 aa).

The interval 1–23 (MAEGHGDAKGATAHTAADGGHKA) is disordered. Over residues 9-18 (KGATAHTAAD) the composition is skewed to low complexity. A helical transmembrane segment spans residues 37 to 57 (LVSLTIAFVALYLIVSKIILP).

This sequence belongs to the ATPase B chain family. In terms of assembly, F-type ATPases have 2 components, F(1) - the catalytic core - and F(0) - the membrane proton channel. F(1) has five subunits: alpha(3), beta(3), gamma(1), delta(1), epsilon(1). F(0) has three main subunits: a(1), b(2) and c(10-14). The alpha and beta chains form an alternating ring which encloses part of the gamma chain. F(1) is attached to F(0) by a central stalk formed by the gamma and epsilon chains, while a peripheral stalk is formed by the delta and b chains.

Its subcellular location is the cell inner membrane. In terms of biological role, f(1)F(0) ATP synthase produces ATP from ADP in the presence of a proton or sodium gradient. F-type ATPases consist of two structural domains, F(1) containing the extramembraneous catalytic core and F(0) containing the membrane proton channel, linked together by a central stalk and a peripheral stalk. During catalysis, ATP synthesis in the catalytic domain of F(1) is coupled via a rotary mechanism of the central stalk subunits to proton translocation. Functionally, component of the F(0) channel, it forms part of the peripheral stalk, linking F(1) to F(0). The b'-subunit is a diverged and duplicated form of b found in plants and photosynthetic bacteria. This Rhodopseudomonas palustris (strain BisB5) protein is ATP synthase subunit b 2 (atpF2).